Consider the following 647-residue polypeptide: DNA polymerase subunit gamma-1 (647 aa).

The segment at 116-147 is disordered; sequence ERPGRAEQSQMQDEDGLPELVEESSQPSFHHG. Residues 127-137 are compositionally biased toward acidic residues; sequence QDEDGLPELVE.

It belongs to the DNA polymerase type-A family. As to quaternary structure, heterotrimer composed of a catalytic subunit and a homodimer of accessory subunits. Interacts with TTC3. The cofactor is Mg(2+).

The protein resides in the mitochondrion. Its subcellular location is the mitochondrion matrix. It localises to the mitochondrion nucleoid. The enzyme catalyses DNA(n) + a 2'-deoxyribonucleoside 5'-triphosphate = DNA(n+1) + diphosphate. In terms of biological role, involved in the replication of mitochondrial DNA. Associates with mitochondrial DNA. This is DNA polymerase subunit gamma-1 (POLG) from Gallus gallus (Chicken).